The following is a 341-amino-acid chain: Biotin synthase (341 aa).

The 225-residue stretch at 39–263 (EQVQLCTLLS…VAVARITMPL (225 aa)) folds into the Radical SAM core domain. [4Fe-4S] cluster is bound by residues C54, C58, and C61. Residues C98, C129, C189, and R267 each contribute to the [2Fe-2S] cluster site.

It belongs to the radical SAM superfamily. Biotin synthase family. In terms of assembly, homodimer. The cofactor is [4Fe-4S] cluster. It depends on [2Fe-2S] cluster as a cofactor.

It carries out the reaction (4R,5S)-dethiobiotin + (sulfur carrier)-SH + 2 reduced [2Fe-2S]-[ferredoxin] + 2 S-adenosyl-L-methionine = (sulfur carrier)-H + biotin + 2 5'-deoxyadenosine + 2 L-methionine + 2 oxidized [2Fe-2S]-[ferredoxin]. It functions in the pathway cofactor biosynthesis; biotin biosynthesis; biotin from 7,8-diaminononanoate: step 2/2. In terms of biological role, catalyzes the conversion of dethiobiotin (DTB) to biotin by the insertion of a sulfur atom into dethiobiotin via a radical-based mechanism. The sequence is that of Biotin synthase from Erythrobacter litoralis (strain HTCC2594).